The sequence spans 1380 residues: DNA-directed RNA polymerase subunit beta (1380 aa).

It belongs to the RNA polymerase beta chain family. In terms of assembly, the RNAP catalytic core consists of 2 alpha, 1 beta, 1 beta' and 1 omega subunit. When a sigma factor is associated with the core the holoenzyme is formed, which can initiate transcription.

The catalysed reaction is RNA(n) + a ribonucleoside 5'-triphosphate = RNA(n+1) + diphosphate. In terms of biological role, DNA-dependent RNA polymerase catalyzes the transcription of DNA into RNA using the four ribonucleoside triphosphates as substrates. The sequence is that of DNA-directed RNA polymerase subunit beta from Ehrlichia ruminantium (strain Gardel).